The following is a 374-amino-acid chain: Gustatory receptor 23a (374 aa).

The Cytoplasmic segment spans residues 1 to 6; sequence MFPPTR. A helical membrane pass occupies residues 7–27; that stretch reads VQASSRVVLKIFHFILVAFSL. At 28-36 the chain is on the extracellular side; that stretch reads RSRRLSRLV. The helical transmembrane segment at 37-57 threads the bilayer; sequence LWLQFLGWLTWFISMWTQSVI. Residues 58–72 are Cytoplasmic-facing; that stretch reads YAQTIDCTLDCSLRH. A helical transmembrane segment spans residues 73–93; it reads ILTFFQTVSHAFIVVTSFLDG. At 94-112 the chain is on the extracellular side; the sequence is FRIKQDQLDEPIAFEDSDP. A helical membrane pass occupies residues 113 to 133; that stretch reads WLAFTVLAMLVPTLGVEYLVC. Residues 134 to 226 lie on the Cytoplasmic side of the membrane; that stretch reads SNAPEYAFRI…YNDLHYLFVR (93 aa). Residues 227–247 traverse the membrane as a helical segment; the sequence is INGYFGGSLLTIIIVHFAIFV. Residues 248-263 lie on the Extracellular side of the membrane; that stretch reads SNSYWLFVDIRTRPWR. Residues 264–284 form a helical membrane-spanning segment; the sequence is IYAILLNLGFIFNVALQMAAA. The Cytoplasmic portion of the chain corresponds to 285 to 343; sequence CWHCQQSYNLGRQIGCLISKLVKPQGSKLYNDLVSEFSLQTLHQRFVVTAKDFFSLNLH. A helical transmembrane segment spans residues 344–364; sequence LLSSMFAAVVTYLVILIQFMF. Residues 365–374 lie on the Extracellular side of the membrane; the sequence is AERSSTRGSG.

This sequence belongs to the insect chemoreceptor superfamily. Gustatory receptor (GR) family. Gr2a subfamily. Expressed in the adult labellar chemosensory neurons and labral sense organ. Expressed in neurons of the dorsal pharyngeal sense organ of larvae.

It is found in the cell membrane. Its function is as follows. Probable gustatory receptor which mediates acceptance or avoidance behavior, depending on its substrates. This chain is Gustatory receptor 23a (Gr23a), found in Drosophila melanogaster (Fruit fly).